The sequence spans 325 residues: DNA repair and recombination protein RadA (325 aa).

107–114 (GEFGSGKT) is an ATP binding site.

The protein belongs to the eukaryotic RecA-like protein family.

Involved in DNA repair and in homologous recombination. Binds and assemble on single-stranded DNA to form a nucleoprotein filament. Hydrolyzes ATP in a ssDNA-dependent manner and promotes DNA strand exchange between homologous DNA molecules. This chain is DNA repair and recombination protein RadA, found in Methanosarcina acetivorans (strain ATCC 35395 / DSM 2834 / JCM 12185 / C2A).